Consider the following 701-residue polypeptide: Polyphosphate kinase (701 aa).

Residue Asn45 coordinates ATP. 2 residues coordinate Mg(2+): Arg373 and Arg403. A PLD phosphodiesterase 1 domain is found at 428–462; sequence PGMKIHAKLLLITRKEGDEFVRYAHIGTGNFHERT. Residue His433 is the Phosphohistidine intermediate of the active site. The ATP site is built by Tyr466, Arg562, and His590. The PLD phosphodiesterase 2 domain maps to 585–615; the sequence is DRFLEHPRVLVVHNDGNPQVFISSADWMERN.

Belongs to the polyphosphate kinase 1 (PPK1) family. Mg(2+) serves as cofactor. In terms of processing, an intermediate of this reaction is the autophosphorylated ppk in which a phosphate is covalently linked to a histidine residue through a N-P bond.

It carries out the reaction [phosphate](n) + ATP = [phosphate](n+1) + ADP. Its function is as follows. Catalyzes the reversible transfer of the terminal phosphate of ATP to form a long-chain polyphosphate (polyP). The protein is Polyphosphate kinase of Vibrio cholerae serotype O1 (strain ATCC 39315 / El Tor Inaba N16961).